The chain runs to 105 residues: Large ribosomal subunit protein bL21 (105 aa).

This sequence belongs to the bacterial ribosomal protein bL21 family. As to quaternary structure, part of the 50S ribosomal subunit. Contacts protein L20.

Functionally, this protein binds to 23S rRNA in the presence of protein L20. This Frankia casuarinae (strain DSM 45818 / CECT 9043 / HFP020203 / CcI3) protein is Large ribosomal subunit protein bL21.